A 447-amino-acid polypeptide reads, in one-letter code: MAGFEANFDGLVGMTHHYAGLSVGNKASINNKDSVSNPRKAALQGLMKMKALADEGFIQGVLPPQQRPHIPALRNLGFVGSDEQILHKAAKYSPVLLSKLSSASSMWTANAATVSPSADSADQRVHFTVANLNNKLHRSLEIATTTAALKATFADQNYFVHHQALPQHEDFGDEGAANHNRLGGDYDSPGVQVFVYGRSVFRGGPVPKRYPARQTLEASEAIARLHRLNPAQTVFVQQNPVAIDSGVFHNDVIAVSNRNVLFHHQYAYLNQSQVLTEIRQKMAVLGQNFVSIEVPAEQISIKDAVDSYLFNSQLLSKIDGKMVLVVPEECRQHSAVWDYLQSLSAQTSAPINEVRVFDLRESMRNGGGPACLRLRVVLNDAEFRAVNPATLMNTQLYQRLTKWIEHHYRDELCASDLADPQLLCEVYTALDELTQILNLGSIYEFQR.

Substrate-binding positions include 19–28 (AGLSVGNKAS), Asn-110, and 137–138 (HR). Glu-174 is a catalytic residue. Substrate is bound at residue Arg-213. His-249 is an active-site residue. Substrate contacts are provided by Asp-251 and Asn-365. Cys-371 (nucleophile) is an active-site residue.

Belongs to the succinylarginine dihydrolase family. Homodimer.

It carries out the reaction N(2)-succinyl-L-arginine + 2 H2O + 2 H(+) = N(2)-succinyl-L-ornithine + 2 NH4(+) + CO2. Its pathway is amino-acid degradation; L-arginine degradation via AST pathway; L-glutamate and succinate from L-arginine: step 2/5. In terms of biological role, catalyzes the hydrolysis of N(2)-succinylarginine into N(2)-succinylornithine, ammonia and CO(2). This Photorhabdus laumondii subsp. laumondii (strain DSM 15139 / CIP 105565 / TT01) (Photorhabdus luminescens subsp. laumondii) protein is N-succinylarginine dihydrolase.